Here is a 222-residue protein sequence, read N- to C-terminus: Large ribosomal subunit protein uL4 (222 aa).

Belongs to the universal ribosomal protein uL4 family. In terms of assembly, part of the 50S ribosomal subunit.

Functionally, one of the primary rRNA binding proteins, this protein initially binds near the 5'-end of the 23S rRNA. It is important during the early stages of 50S assembly. It makes multiple contacts with different domains of the 23S rRNA in the assembled 50S subunit and ribosome. In terms of biological role, forms part of the polypeptide exit tunnel. In Methylacidiphilum infernorum (isolate V4) (Methylokorus infernorum (strain V4)), this protein is Large ribosomal subunit protein uL4.